The sequence spans 595 residues: Aspartate--tRNA(Asp/Asn) ligase (595 aa).

Glu175 is a binding site for L-aspartate. The aspartate stretch occupies residues Gln199–Lys202. Residues Arg221 and His454 each contribute to the L-aspartate site. An ATP-binding site is contributed by Arg221 to Glu223. ATP is bound at residue Glu488. Arg495 serves as a coordination point for L-aspartate. Residue Gly540–Arg543 participates in ATP binding.

Belongs to the class-II aminoacyl-tRNA synthetase family. Type 1 subfamily. Homodimer.

Its subcellular location is the cytoplasm. The enzyme catalyses tRNA(Asx) + L-aspartate + ATP = L-aspartyl-tRNA(Asx) + AMP + diphosphate. Functionally, aspartyl-tRNA synthetase with relaxed tRNA specificity since it is able to aspartylate not only its cognate tRNA(Asp) but also tRNA(Asn). Reaction proceeds in two steps: L-aspartate is first activated by ATP to form Asp-AMP and then transferred to the acceptor end of tRNA(Asp/Asn). This Brucella abortus (strain S19) protein is Aspartate--tRNA(Asp/Asn) ligase.